A 78-amino-acid chain; its full sequence is Small ribosomal subunit protein uS17 (78 aa).

Belongs to the universal ribosomal protein uS17 family. In terms of assembly, part of the 30S ribosomal subunit.

Its function is as follows. One of the primary rRNA binding proteins, it binds specifically to the 5'-end of 16S ribosomal RNA. The protein is Small ribosomal subunit protein uS17 of Allorhizobium ampelinum (strain ATCC BAA-846 / DSM 112012 / S4) (Agrobacterium vitis (strain S4)).